We begin with the raw amino-acid sequence, 359 residues long: tRNA N6-adenosine threonylcarbamoyltransferase (359 aa).

Fe cation contacts are provided by histidine 115 and histidine 119. Substrate-binding positions include 137-141 (LVSGG), aspartate 170, glycine 183, and asparagine 283. Aspartate 311 contacts Fe cation. Residues 328–359 (APDSLDIAPRSRWPLDEKSAPVFGTGRRGAKA) are disordered.

It belongs to the KAE1 / TsaD family. The cofactor is Fe(2+).

Its subcellular location is the cytoplasm. It catalyses the reaction L-threonylcarbamoyladenylate + adenosine(37) in tRNA = N(6)-L-threonylcarbamoyladenosine(37) in tRNA + AMP + H(+). Its function is as follows. Required for the formation of a threonylcarbamoyl group on adenosine at position 37 (t(6)A37) in tRNAs that read codons beginning with adenine. Is involved in the transfer of the threonylcarbamoyl moiety of threonylcarbamoyl-AMP (TC-AMP) to the N6 group of A37, together with TsaE and TsaB. TsaD likely plays a direct catalytic role in this reaction. This Brucella melitensis biotype 2 (strain ATCC 23457) protein is tRNA N6-adenosine threonylcarbamoyltransferase.